Here is a 462-residue protein sequence, read N- to C-terminus: Protein MOS2 (462 aa).

Residues Met1–Lys10 show a composition bias toward low complexity. The interval Met1–Lys32 is disordered. The G-patch domain occupies Val156 to Asp202. Positions Val231 to Ser258 constitute a KOW 1 domain. The segment covering Asp301 to Glu336 has biased composition (basic and acidic residues). The tract at residues Asp301–Lys340 is disordered. The 28-residue stretch at Leu401 to Asp428 folds into the KOW 2 domain.

This sequence belongs to the MOS2 family.

It is found in the nucleus. Its function is as follows. Required for innate and induced resistance to pathogens such as compatible and incompatible isolates of P.syringae and P.parasitica. The sequence is that of Protein MOS2 (MOS2) from Arabidopsis thaliana (Mouse-ear cress).